The chain runs to 68 residues: Protein SlyX homolog (68 aa).

The protein belongs to the SlyX family.

This Ectopseudomonas mendocina (strain ymp) (Pseudomonas mendocina) protein is Protein SlyX homolog.